The following is a 224-amino-acid chain: Claudin-17 (224 aa).

At 1–7 (MAFYPLQ) the chain is on the cytoplasmic side. A helical transmembrane segment spans residues 8 to 28 (IAGLVLGFLGMVGTLATTLLP). Topologically, residues 29–81 (QWRVSAFVGSNIIVFERLWEGLWMNCIRQARVRLQCKFYSSLLALPPALETAR) are extracellular. A helical membrane pass occupies residues 82-102 (ALMCVAVALSLIALLIGICGM). The Cytoplasmic portion of the chain corresponds to 103 to 124 (KQVQCTGSNERAKAYLLGTSGV). A helical membrane pass occupies residues 125-145 (LFILTGIFVLIPVSWTANIII). Over 146–164 (RDFYNPAIHIGQKRELGAA) the chain is Extracellular. Residues 165–185 (LFLGWASAAVLFIGGGLLCGF) form a helical membrane-spanning segment. Topologically, residues 186-224 (CCCNRKKQGYRYPVPGYRVPHTDKRRNTTMLSKTSTSYV) are cytoplasmic.

It belongs to the claudin family. Cannot form tight junction strands on its own. Interacts with OCLN. As to expression, in the kidney, expressed in the proximal tubule and in the Henle's loop. In the distal convoluted tubule, not expressed in all tubules. Not detected in the collecting duct (at protein level).

It localises to the cell junction. It is found in the tight junction. The protein resides in the basolateral cell membrane. The enzyme catalyses chloride(in) = chloride(out). It carries out the reaction hydrogencarbonate(in) = hydrogencarbonate(out). The catalysed reaction is bromide(in) = bromide(out). It catalyses the reaction iodide(out) = iodide(in). The enzyme catalyses fluoride(in) = fluoride(out). It carries out the reaction nitrate(in) = nitrate(out). The catalysed reaction is thiocyanate(in) = thiocyanate(out). Channel-forming tight junction protein with selectivity for anions, including chloride and hydrogencarbonate, and for solutes smaller than 9 Angstrom in diameter. In the kidney proximal tubule, may be involved in paracellular reabsorption of filtered anions. Does not affect water permeability. The chain is Claudin-17 (CLDN17) from Homo sapiens (Human).